Reading from the N-terminus, the 89-residue chain is Defensin-like protein 147 (89 aa).

Residues 1–24 (MKKIFQLSFTVFIIFISLVLGVVG) form the signal peptide. Intrachain disulfides connect C34/C82, C46/C66, C51/C79, and C55/C81.

Belongs to the DEFL family. In terms of tissue distribution, expressed in flower buds, but not in stems, roots or rosette leaves.

It is found in the secreted. In Arabidopsis thaliana (Mouse-ear cress), this protein is Defensin-like protein 147 (LCR1).